The following is a 475-amino-acid chain: Protein transport protein Sec61 subunit alpha (475 aa).

Transmembrane regions (helical) follow at residues 33–53 (LWTA…LFGI), 76–96 (LMEL…LLAG), 118–138 (LFGM…GMYG), 145–165 (AGIC…VLLL), 173–193 (YGLG…TIVW), 241–261 (NLMN…FQGF), 289–309 (IPII…QMLA), 354–374 (FLDP…CAFF), 420–440 (AAFG…IGAI), and 441–461 (GSGT…EIFV).

This sequence belongs to the SecY/SEC61-alpha family. The SEC61 channel-forming translocon complex consists of channel-forming core components SEC61A1, SEC61B and SEC61G and different auxiliary components such as SEC62 and SEC63. The SEC61 channel associates with the multi-pass translocon (MPT) complex. As to expression, expressed predominantly in epidermal cells of the embryo.

Its subcellular location is the endoplasmic reticulum membrane. In terms of biological role, component of SEC61 channel-forming translocon complex that mediates transport of signal peptide-containing precursor polypeptides across the endoplasmic reticulum (ER). Forms a ribosome receptor and a gated pore in the ER membrane, both functions required for cotranslational translocation of nascent polypeptides. May cooperate with auxiliary protein SEC62, SEC63 and HSPA5/BiP to enable post-translational transport of small presecretory proteins. The SEC61 channel is also involved in ER membrane insertion of transmembrane proteins: it mediates membrane insertion of the first few transmembrane segments of proteins, while insertion of subsequent transmembrane regions of multi-pass membrane proteins is mediated by the multi-pass translocon (MPT) complex. The protein is Protein transport protein Sec61 subunit alpha of Halocynthia roretzi (Sea squirt).